The primary structure comprises 1332 residues: Xanthine dehydrogenase/oxidase (1332 aa).

The region spanning D4 to I91 is the 2Fe-2S ferredoxin-type domain. The [2Fe-2S] cluster site is built by C43, C48, C51, C73, C113, C116, C148, and C150. An FAD-binding PCMH-type domain is found at F229–E414. Residues L257–I264, F337, S347–N351, D360, L404, and K422 each bind FAD. A disulfide bond links C535 and C992. Positions 767 and 798 each coordinate Mo-molybdopterin. Residues E802 and R880 each contribute to the substrate site. R912 lines the Mo-molybdopterin pocket. Substrate is bound by residues F914 and T1010. Mo-molybdopterin is bound at residue A1079. E1261 functions as the Proton acceptor in the catalytic mechanism.

This sequence belongs to the xanthine dehydrogenase family. Homodimer. Interacts with BTN1A1. [2Fe-2S] cluster is required as a cofactor. It depends on FAD as a cofactor. Requires Mo-molybdopterin as cofactor. Subject to partial proteolysis; this alters the enzyme from the dehydrogenase form (D) to the oxidase form (O). Post-translationally, contains sulfhydryl groups that are easily oxidized (in vitro); this alters the enzyme from the dehydrogenase form (D) to the oxidase form (O). Detected in milk (at protein level).

The protein localises to the cytoplasm. It is found in the peroxisome. The protein resides in the secreted. It carries out the reaction xanthine + NAD(+) + H2O = urate + NADH + H(+). The enzyme catalyses hypoxanthine + NAD(+) + H2O = xanthine + NADH + H(+). It catalyses the reaction xanthine + O2 + H2O = urate + H2O2. Its activity is regulated as follows. Can be converted from the dehydrogenase form (D) to the oxidase form (O) irreversibly by proteolysis or reversibly through the oxidation of sulfhydryl groups. Its function is as follows. Key enzyme in purine degradation. Catalyzes the oxidation of hypoxanthine to xanthine. Catalyzes the oxidation of xanthine to uric acid. Contributes to the generation of reactive oxygen species. The polypeptide is Xanthine dehydrogenase/oxidase (XDH) (Bos taurus (Bovine)).